Consider the following 238-residue polypeptide: 2-C-methyl-D-erythritol 4-phosphate cytidylyltransferase (238 aa).

This sequence belongs to the IspD/TarI cytidylyltransferase family. IspD subfamily.

The enzyme catalyses 2-C-methyl-D-erythritol 4-phosphate + CTP + H(+) = 4-CDP-2-C-methyl-D-erythritol + diphosphate. It participates in isoprenoid biosynthesis; isopentenyl diphosphate biosynthesis via DXP pathway; isopentenyl diphosphate from 1-deoxy-D-xylulose 5-phosphate: step 2/6. Its function is as follows. Catalyzes the formation of 4-diphosphocytidyl-2-C-methyl-D-erythritol from CTP and 2-C-methyl-D-erythritol 4-phosphate (MEP). In Acinetobacter baumannii (strain ACICU), this protein is 2-C-methyl-D-erythritol 4-phosphate cytidylyltransferase.